Reading from the N-terminus, the 139-residue chain is uncharacterized protein (139 aa).

This is an uncharacterized protein from Dictyostelium discoideum (Social amoeba).